The primary structure comprises 1250 residues: Probable autotransporter YfaL (1250 aa).

The first 28 residues, 1–28 (MRIIFLRKEYLSLLPSMIASLFSANGVA), serve as a signal peptide directing secretion. Residues 914–951 (RSQEVTPPSPPDPDPTPDPDPTPDPDPTPDPEPTPAYQ) form a disordered region. Residues 919-920 (TP) form repeat 1. The interval 919 to 948 (TPPSPPDPDPTPDPDPTPDPDPTPDPEPTP) is 15 X 2 AA approximate tandem repeats of [DTPE]-P. Residues 921-922 (PS) form a 2; approximate repeat. Repeat unit 3 spans residues 923–924 (PP). One copy of the 4; approximate repeat lies at 925–926 (DP). Tandem repeats lie at residues 927–928 (DP), 929–930 (TP), 931–932 (DP), 933–934 (DP), 935–936 (TP), 937–938 (DP), 939–940 (DP), 941–942 (TP), 943–944 (DP), 945–946 (EP), and 947–948 (TP). The span at 928-942 (PTPDPDPTPDPDPTP) shows a compositional bias: acidic residues. An Autotransporter domain is found at 980 to 1250 (AGGDGQTLNL…AGFLSMTVKW (271 aa)).

In terms of processing, an approximately 170 kDa protein is detected in the outer membrane, while a C-terminal 55 kDa fragment is detected in whole cells. The full-length putative autotransporter may be cleaved to release the mature protein from the outer membrane; Pefabloc SC, a Ser-Thr protease inhibitor prevents the appearance of the 55 kDa C--terminal fragment.

It localises to the periplasm. Its subcellular location is the secreted. It is found in the cell surface. The protein localises to the cell outer membrane. In terms of biological role, probably an autotransporter. Upon overexpression shows increased adherence to polyvinyl chloride (PVC) plates, increased mature biofilm formation. The sequence is that of Probable autotransporter YfaL (yfaL) from Escherichia coli (strain K12).